Here is a 226-residue protein sequence, read N- to C-terminus: 2-C-methyl-D-erythritol 4-phosphate cytidylyltransferase (226 aa).

This sequence belongs to the IspD/TarI cytidylyltransferase family. IspD subfamily.

The catalysed reaction is 2-C-methyl-D-erythritol 4-phosphate + CTP + H(+) = 4-CDP-2-C-methyl-D-erythritol + diphosphate. The protein operates within isoprenoid biosynthesis; isopentenyl diphosphate biosynthesis via DXP pathway; isopentenyl diphosphate from 1-deoxy-D-xylulose 5-phosphate: step 2/6. In terms of biological role, catalyzes the formation of 4-diphosphocytidyl-2-C-methyl-D-erythritol from CTP and 2-C-methyl-D-erythritol 4-phosphate (MEP). In Synechococcus sp. (strain CC9902), this protein is 2-C-methyl-D-erythritol 4-phosphate cytidylyltransferase.